Here is a 178-residue protein sequence, read N- to C-terminus: Gamma-crystallin S (178 aa).

S2 is modified (N-acetylserine). The N-terminal arm stretch occupies residues 2–5 (SKSG). 2 Beta/gamma crystallin 'Greek key' domains span residues 6-44 (TKITFYEDKHFQGRHYDCDCDCADFHMYLSRCNSIRVEG) and 45-87 (GTWA…RAVH). Residues 88 to 93 (LSSGGQ) form a connecting peptide region. 2 Beta/gamma crystallin 'Greek key' domains span residues 94 to 134 (YKIQ…KVLD) and 135 to 177 (GVWI…RRIV).

It belongs to the beta/gamma-crystallin family. Monomer.

In terms of biological role, crystallins are the dominant structural components of the vertebrate eye lens. The polypeptide is Gamma-crystallin S (CRYGS) (Canis lupus familiaris (Dog)).